A 542-amino-acid chain; its full sequence is Membrane protein insertase YidC (542 aa).

Helical transmembrane passes span 6–26, 326–346, 350–370, 421–441, 458–478, and 501–521; these read NILLIGLLFVSFLMWQQWQTD, LVVDYGFLWWLAIPIHWLLMF, FVGNWGVAIILITLTVRGGLY, GGCLPILLQMPIFIALYWVLL, LSVQDPYYVLPLLMGLSMFLM, and VIFTVFFLWFPAGLVLYWLVG.

The protein belongs to the OXA1/ALB3/YidC family. Type 1 subfamily. As to quaternary structure, interacts with the Sec translocase complex via SecD. Specifically interacts with transmembrane segments of nascent integral membrane proteins during membrane integration.

The protein resides in the cell inner membrane. In terms of biological role, required for the insertion and/or proper folding and/or complex formation of integral membrane proteins into the membrane. Involved in integration of membrane proteins that insert both dependently and independently of the Sec translocase complex, as well as at least some lipoproteins. Aids folding of multispanning membrane proteins. The protein is Membrane protein insertase YidC of Shewanella frigidimarina (strain NCIMB 400).